The following is a 62-amino-acid chain: MNAITTIKCPQCRKETTLAGNPYRPFCSQRCKMIDLGTWADEGYRIPGEKAPESGGEEPGDE.

Positions 9, 12, 27, and 31 each coordinate Zn(2+). Basic and acidic residues predominate over residues 43–52 (GYRIPGEKAP). Positions 43–62 (GYRIPGEKAPESGGEEPGDE) are disordered.

The protein belongs to the DNA gyrase inhibitor YacG family. Interacts with GyrB. Zn(2+) serves as cofactor.

Its function is as follows. Inhibits all the catalytic activities of DNA gyrase by preventing its interaction with DNA. Acts by binding directly to the C-terminal domain of GyrB, which probably disrupts DNA binding by the gyrase. This chain is DNA gyrase inhibitor YacG, found in Geobacter sp. (strain M21).